Reading from the N-terminus, the 195-residue chain is Holliday junction branch migration complex subunit RuvA (195 aa).

A domain I region spans residues 1-61 (MYEYLDGVVV…ENDQTLYGFK (61 aa)). The domain II stretch occupies residues 62–139 (KAEDKELFLN…AVENEVGTLF (78 aa)). The interval 139 to 143 (FDLST) is flexible linker. Residues 144-195 (TSNQALDEALEALIALGYSEKEVKKLTKKLSEQTDRTTDQYISSGLKLLMKG) are domain III.

This sequence belongs to the RuvA family. As to quaternary structure, homotetramer. Forms an RuvA(8)-RuvB(12)-Holliday junction (HJ) complex. HJ DNA is sandwiched between 2 RuvA tetramers; dsDNA enters through RuvA and exits via RuvB. An RuvB hexamer assembles on each DNA strand where it exits the tetramer. Each RuvB hexamer is contacted by two RuvA subunits (via domain III) on 2 adjacent RuvB subunits; this complex drives branch migration. In the full resolvosome a probable DNA-RuvA(4)-RuvB(12)-RuvC(2) complex forms which resolves the HJ.

Its subcellular location is the cytoplasm. The RuvA-RuvB-RuvC complex processes Holliday junction (HJ) DNA during genetic recombination and DNA repair, while the RuvA-RuvB complex plays an important role in the rescue of blocked DNA replication forks via replication fork reversal (RFR). RuvA specifically binds to HJ cruciform DNA, conferring on it an open structure. The RuvB hexamer acts as an ATP-dependent pump, pulling dsDNA into and through the RuvAB complex. HJ branch migration allows RuvC to scan DNA until it finds its consensus sequence, where it cleaves and resolves the cruciform DNA. The chain is Holliday junction branch migration complex subunit RuvA from Pediococcus pentosaceus (strain ATCC 25745 / CCUG 21536 / LMG 10740 / 183-1w).